The chain runs to 212 residues: Ribosomal RNA small subunit methyltransferase G (212 aa).

Residues G80, L85, A131–E132, and R146 each bind S-adenosyl-L-methionine.

It belongs to the methyltransferase superfamily. RNA methyltransferase RsmG family.

The protein resides in the cytoplasm. The enzyme catalyses guanosine(527) in 16S rRNA + S-adenosyl-L-methionine = N(7)-methylguanosine(527) in 16S rRNA + S-adenosyl-L-homocysteine. Specifically methylates the N7 position of guanine in position 527 of 16S rRNA. The chain is Ribosomal RNA small subunit methyltransferase G from Xanthomonas campestris pv. campestris (strain 8004).